A 273-amino-acid polypeptide reads, in one-letter code: Probable NAD(P)H dehydrogenase (quinone) FQR1-like 2 (273 aa).

The disordered stretch occupies residues 1 to 60; it reads MGKGGGCVPSKKKKPATTGDGPGIDDDNDATNAPIQIDDDQTTIDGDRTTATNTGGTTTP. The segment covering 49–60 has biased composition (low complexity); that stretch reads TTATNTGGTTTP. Residues 75-263 form the Flavodoxin-like domain; sequence IFVVFYSMYG…ALAEHQGNYM (189 aa). Residues 81-85, 183-236, and histidine 207 each bind FMN; these read SMYGH and FFVS…SPYG. Residue tyrosine 83 participates in NAD(+) binding.

The protein belongs to the WrbA family. It depends on FMN as a cofactor.

The protein localises to the cell membrane. The catalysed reaction is a quinone + NADH + H(+) = a quinol + NAD(+). It catalyses the reaction a quinone + NADPH + H(+) = a quinol + NADP(+). Functionally, catalyzes the transfer of electrons from NADH and NADPH to reduce quinone to the hydroquinone state. This is Probable NAD(P)H dehydrogenase (quinone) FQR1-like 2 from Arabidopsis thaliana (Mouse-ear cress).